The sequence spans 393 residues: S-adenosylmethionine synthase (393 aa).

Histidine 16 serves as a coordination point for ATP. Aspartate 18 serves as a coordination point for Mg(2+). Glutamate 44 serves as a coordination point for K(+). Residues glutamate 57 and glutamine 100 each contribute to the L-methionine site. The segment at 100–110 (QSNDIAQGVDQ) is flexible loop. ATP-binding positions include 167-169 (DAK), 238-239 (RF), aspartate 247, 253-254 (RK), alanine 270, and lysine 274. Aspartate 247 is an L-methionine binding site. Lysine 278 provides a ligand contact to L-methionine.

Belongs to the AdoMet synthase family. Homotetramer; dimer of dimers. Requires Mg(2+) as cofactor. K(+) is required as a cofactor.

The protein localises to the cytoplasm. The catalysed reaction is L-methionine + ATP + H2O = S-adenosyl-L-methionine + phosphate + diphosphate. The protein operates within amino-acid biosynthesis; S-adenosyl-L-methionine biosynthesis; S-adenosyl-L-methionine from L-methionine: step 1/1. Functionally, catalyzes the formation of S-adenosylmethionine (AdoMet) from methionine and ATP. The overall synthetic reaction is composed of two sequential steps, AdoMet formation and the subsequent tripolyphosphate hydrolysis which occurs prior to release of AdoMet from the enzyme. The polypeptide is S-adenosylmethionine synthase (Methylibium petroleiphilum (strain ATCC BAA-1232 / LMG 22953 / PM1)).